Consider the following 330-residue polypeptide: Aspartate--ammonia ligase (330 aa).

Belongs to the class-II aminoacyl-tRNA synthetase family. AsnA subfamily. Homodimer.

It is found in the cytoplasm. It catalyses the reaction L-aspartate + NH4(+) + ATP = L-asparagine + AMP + diphosphate + H(+). It functions in the pathway amino-acid biosynthesis; L-asparagine biosynthesis; L-asparagine from L-aspartate (ammonia route): step 1/1. The chain is Aspartate--ammonia ligase from Salmonella typhi.